The primary structure comprises 574 residues: Lysyl oxidase homolog 1 (574 aa).

The first 25 residues, 1–25, serve as a signal peptide directing secretion; it reads MALARGSRQLGALVWGACLCVLVHG. Residues 26-95 constitute a propeptide that is removed on maturation; the sequence is QQAQPGQGSD…RRSHGSPRRR (70 aa). Disordered regions lie at residues 62–123 and 239–374; these read VPAG…GFGQ and GGEE…DLVP. Positions 86-96 are enriched in basic residues; the sequence is RRSHGSPRRRQ. Pro residues-rich tracts occupy residues 255 to 268 and 313 to 332; these read PERPYVPPPPPPPD and YANPPPEAYGPPRALEPPYL. The interval 311-369 is interaction with FBLN5; it reads PPYANPPPEAYGPPRALEPPYLPVRSSDTPPPGGERNGAQQGRLSVGSVYRPNQNGRGL. The interval 370-574 is lysyl-oxidase like; sequence PDLVPDPNYV…SATNCKIVQS (205 aa). Intrachain disulfides connect Cys-395–Cys-401, Cys-448–Cys-497, Cys-481–Cys-487, Cys-508–Cys-518, and Cys-555–Cys-569. Residues His-449, His-451, and His-453 each contribute to the Cu cation site. Positions 477–512 form a cross-link, lysine tyrosylquinone (Lys-Tyr); alternate; sequence KASFCLEDSTCDFGNLKRYACTSHTQGLSPGCYDTY. 2',4',5'-topaquinone; alternate is present on Tyr-512.

Belongs to the lysyl oxidase family. Interacts (via propeptide) with EFEMP2. Interacts with FBLN5. It depends on Cu cation as a cofactor. Requires lysine tyrosylquinone residue as cofactor. The lysine tyrosylquinone cross-link (LTQ) is generated by condensation of the epsilon-amino group of a lysine with a topaquinone produced by oxidation of tyrosine. Post-translationally, proteolytic processing by a furin-like protease causes removal of N-terminal propeptide resulting in an enzyme largely inactive, but further proteolytic processing by BMP1 results in enzyme activation. Expressed in ocular tissues including the iris, ciliary body, lens and optic nerve. Not detected in the retina.

It localises to the secreted. The protein localises to the extracellular space. The protein resides in the extracellular matrix. It catalyses the reaction L-lysyl-[protein] + O2 + H2O = (S)-2-amino-6-oxohexanoyl-[protein] + H2O2 + NH4(+). Its function is as follows. Catalyzes the oxidative deamination of lysine and hydroxylysine residues in collagen and elastin, resulting in the formation of covalent cross-linkages, and the stabilization of collagen and elastin fibers. Essential for the elastic fiber homeostasis and for their maintenance at adult age. This Homo sapiens (Human) protein is Lysyl oxidase homolog 1 (LOXL1).